The chain runs to 243 residues: Ubiquinone/menaquinone biosynthesis C-methyltransferase UbiE (243 aa).

S-adenosyl-L-methionine contacts are provided by residues T69, D90, and 116 to 117; that span reads DA.

Belongs to the class I-like SAM-binding methyltransferase superfamily. MenG/UbiE family.

It catalyses the reaction a 2-demethylmenaquinol + S-adenosyl-L-methionine = a menaquinol + S-adenosyl-L-homocysteine + H(+). The catalysed reaction is a 2-methoxy-6-(all-trans-polyprenyl)benzene-1,4-diol + S-adenosyl-L-methionine = a 5-methoxy-2-methyl-3-(all-trans-polyprenyl)benzene-1,4-diol + S-adenosyl-L-homocysteine + H(+). It functions in the pathway quinol/quinone metabolism; menaquinone biosynthesis; menaquinol from 1,4-dihydroxy-2-naphthoate: step 2/2. It participates in cofactor biosynthesis; ubiquinone biosynthesis. Functionally, methyltransferase required for the conversion of demethylmenaquinol (DMKH2) to menaquinol (MKH2) and the conversion of 2-polyprenyl-6-methoxy-1,4-benzoquinol (DDMQH2) to 2-polyprenyl-3-methyl-6-methoxy-1,4-benzoquinol (DMQH2). The polypeptide is Ubiquinone/menaquinone biosynthesis C-methyltransferase UbiE (Burkholderia multivorans (strain ATCC 17616 / 249)).